The chain runs to 363 residues: uncharacterized protein (363 aa).

The tract at residues 35-262 is disordered; that stretch reads TVPGPPGAES…GLSPCCGDGG (228 aa). The segment covering 56-75 has biased composition (polar residues); sequence AVSSSRNPNSAGRTPNSYLT. Low complexity predominate over residues 100–116; that stretch reads GADPALGSLPAAGLSGL.

This is an uncharacterized protein from Homo sapiens (Human).